We begin with the raw amino-acid sequence, 130 residues long: Small ribosomal subunit protein uS9 (130 aa).

The tract at residues 98–130 (LKKAGMLTRDPRMKERKKYGLKKARKASQFSKR) is disordered. Residues 111 to 130 (KERKKYGLKKARKASQFSKR) are compositionally biased toward basic residues.

It belongs to the universal ribosomal protein uS9 family.

This chain is Small ribosomal subunit protein uS9, found in Lacticaseibacillus casei (strain BL23) (Lactobacillus casei).